We begin with the raw amino-acid sequence, 393 residues long: ATP phosphoribosyltransferase regulatory subunit (393 aa).

It belongs to the class-II aminoacyl-tRNA synthetase family. HisZ subfamily. In terms of assembly, heteromultimer composed of HisG and HisZ subunits.

Its subcellular location is the cytoplasm. Its pathway is amino-acid biosynthesis; L-histidine biosynthesis; L-histidine from 5-phospho-alpha-D-ribose 1-diphosphate: step 1/9. Functionally, required for the first step of histidine biosynthesis. May allow the feedback regulation of ATP phosphoribosyltransferase activity by histidine. The protein is ATP phosphoribosyltransferase regulatory subunit of Chromohalobacter salexigens (strain ATCC BAA-138 / DSM 3043 / CIP 106854 / NCIMB 13768 / 1H11).